The following is a 311-amino-acid chain: Aspartate carbamoyltransferase catalytic subunit (311 aa).

Residues Arg-58 and Thr-59 each contribute to the carbamoyl phosphate site. Residue Lys-86 participates in L-aspartate binding. Carbamoyl phosphate is bound by residues Arg-108, His-136, and Gln-139. Residues Arg-169 and Arg-223 each contribute to the L-aspartate site. The carbamoyl phosphate site is built by Gly-264 and Pro-265.

It belongs to the aspartate/ornithine carbamoyltransferase superfamily. ATCase family. Heterododecamer (2C3:3R2) of six catalytic PyrB chains organized as two trimers (C3), and six regulatory PyrI chains organized as three dimers (R2).

The catalysed reaction is carbamoyl phosphate + L-aspartate = N-carbamoyl-L-aspartate + phosphate + H(+). It participates in pyrimidine metabolism; UMP biosynthesis via de novo pathway; (S)-dihydroorotate from bicarbonate: step 2/3. Functionally, catalyzes the condensation of carbamoyl phosphate and aspartate to form carbamoyl aspartate and inorganic phosphate, the committed step in the de novo pyrimidine nucleotide biosynthesis pathway. The protein is Aspartate carbamoyltransferase catalytic subunit of Acidiphilium cryptum (strain JF-5).